The following is a 194-amino-acid chain: Accessory gene regulator protein B (194 aa).

Helical transmembrane passes span 44-64 (IVVY…LTHL), 80-100 (SSLL…YLII), 107-127 (FVLL…APAA), 142-162 (KILS…TKEP), and 163-183 (VNKL…PIFF).

It belongs to the AgrB family.

It localises to the cell membrane. In terms of biological role, essential for the production of a quorum sensing system signal molecule, the autoinducing peptide (AIP). This quorum sensing system is responsible for the regulation of the expression of virulence factor genes. Involved in the proteolytic processing of AgrD, the precursor of AIP. In Staphylococcus epidermidis, this protein is Accessory gene regulator protein B.